The following is a 339-amino-acid chain: Ketol-acid reductoisomerase (NADP(+)) (339 aa).

The KARI N-terminal Rossmann domain occupies 1–182 (MRVYYDRDAD…GGGRAGIIET (182 aa)). NADP(+) contacts are provided by residues 24-27 (YGSQ), arginine 48, serine 51, and 83-86 (DEGQ). Histidine 108 is a catalytic residue. An NADP(+)-binding site is contributed by glycine 134. In terms of domain architecture, KARI C-terminal knotted spans 183 to 328 (TFKEEVETDL…EKLRAMMPWI (146 aa)). Residues aspartate 191, glutamate 195, glutamate 227, and glutamate 231 each contribute to the Mg(2+) site. Residue serine 252 coordinates substrate.

Belongs to the ketol-acid reductoisomerase family. The cofactor is Mg(2+).

It carries out the reaction (2R)-2,3-dihydroxy-3-methylbutanoate + NADP(+) = (2S)-2-acetolactate + NADPH + H(+). The catalysed reaction is (2R,3R)-2,3-dihydroxy-3-methylpentanoate + NADP(+) = (S)-2-ethyl-2-hydroxy-3-oxobutanoate + NADPH + H(+). The protein operates within amino-acid biosynthesis; L-isoleucine biosynthesis; L-isoleucine from 2-oxobutanoate: step 2/4. It functions in the pathway amino-acid biosynthesis; L-valine biosynthesis; L-valine from pyruvate: step 2/4. In terms of biological role, involved in the biosynthesis of branched-chain amino acids (BCAA). Catalyzes an alkyl-migration followed by a ketol-acid reduction of (S)-2-acetolactate (S2AL) to yield (R)-2,3-dihydroxy-isovalerate. In the isomerase reaction, S2AL is rearranged via a Mg-dependent methyl migration to produce 3-hydroxy-3-methyl-2-ketobutyrate (HMKB). In the reductase reaction, this 2-ketoacid undergoes a metal-dependent reduction by NADPH to yield (R)-2,3-dihydroxy-isovalerate. The polypeptide is Ketol-acid reductoisomerase (NADP(+)) (Gluconobacter oxydans (strain 621H) (Gluconobacter suboxydans)).